The following is a 146-amino-acid chain: 3-dehydroquinate dehydratase (146 aa).

The active-site Proton acceptor is tyrosine 23. Substrate-binding residues include asparagine 74, histidine 80, and aspartate 87. The Proton donor role is filled by histidine 100. Substrate contacts are provided by residues 101 to 102 and arginine 111; that span reads IS.

The protein belongs to the type-II 3-dehydroquinase family. Homododecamer.

The catalysed reaction is 3-dehydroquinate = 3-dehydroshikimate + H2O. It functions in the pathway metabolic intermediate biosynthesis; chorismate biosynthesis; chorismate from D-erythrose 4-phosphate and phosphoenolpyruvate: step 3/7. Functionally, catalyzes a trans-dehydration via an enolate intermediate. In Bacillus cereus (strain ATCC 10987 / NRS 248), this protein is 3-dehydroquinate dehydratase.